Reading from the N-terminus, the 1429-residue chain is Inactive rhomboid protein 1 (1429 aa).

3 disordered regions span residues 1–36, 560–579, and 740–766; these read MSSN…STRR, GNED…PDRP, and TSAL…QPGA. Topologically, residues 1 to 843 are cytoplasmic; that stretch reads MSSNGSDLGH…RPFFTYWINT (843 aa). Residues 22 to 33 show a composition bias toward low complexity; it reads SVHSSMRGSMSS. 2 stretches are compositionally biased toward polar residues: residues 564-573 and 740-763; these read AGQSNGTNGN and TSAL…SSHQ. A helical transmembrane segment spans residues 844-864; it reads VQVVVLILSIICYGIAPIGIG. Topologically, residues 865 to 1099 are lumenal; it reads SEQKTGQVLV…PDQLYRLLTS (235 aa). A helical transmembrane segment spans residues 1100–1120; that stretch reads LCMHAGILHLAITLIFQHLFL. The Cytoplasmic segment spans residues 1121 to 1131; sequence ADLERLIGTVR. Residues 1132–1152 form a helical membrane-spanning segment; sequence TAIVYIMSGFAGNLTSAILVP. At 1153–1156 the chain is on the lumenal side; the sequence is HRPE. The chain crosses the membrane as a helical span at residues 1157–1177; that stretch reads VGPSASLSGVVASLIALLVWM. Residues 1178-1186 lie on the Cytoplasmic side of the membrane; sequence HWKYLHKPH. A helical transmembrane segment spans residues 1187–1207; the sequence is IALFKLLLLCSVLVGIGTLPY. Residues 1208–1210 lie on the Lumenal side of the membrane; it reads QLN. Residues 1211–1231 form a helical membrane-spanning segment; the sequence is FLGLLAGVICGCLLTMSLVPF. Topologically, residues 1232-1245 are cytoplasmic; sequence TTFSKYGRKKKINL. The chain crosses the membrane as a helical span at residues 1246–1266; that stretch reads IWTCVLFHVVVYTAMIVTFYI. At 1267–1429 the chain is on the lumenal side; the sequence is HPSEFHSISF…INNNTEFNVL (163 aa).

Belongs to the peptidase S54 family. In terms of tissue distribution, specifically expressed in the nervous system and in brain.

It localises to the endoplasmic reticulum membrane. Rhomboid protease-like protein which has no protease activity but regulates the secretion of several ligands of the epidermal growth factor receptor. Indirectly activates the epidermal growth factor receptor signaling pathway and may thereby regulate sleep, cell survival, proliferation and migration. The protein is Inactive rhomboid protein 1 (rho-5) of Drosophila melanogaster (Fruit fly).